The primary structure comprises 122 residues: Small ribosomal subunit protein uS13 (122 aa).

The segment at 92-122 (HRRGLPVRGQRTHTNARTRKGPAKPIAGKKK) is disordered.

Belongs to the universal ribosomal protein uS13 family. Part of the 30S ribosomal subunit. Forms a loose heterodimer with protein S19. Forms two bridges to the 50S subunit in the 70S ribosome.

Located at the top of the head of the 30S subunit, it contacts several helices of the 16S rRNA. In the 70S ribosome it contacts the 23S rRNA (bridge B1a) and protein L5 of the 50S subunit (bridge B1b), connecting the 2 subunits; these bridges are implicated in subunit movement. Contacts the tRNAs in the A and P-sites. The chain is Small ribosomal subunit protein uS13 from Paracoccus denitrificans (strain Pd 1222).